The primary structure comprises 353 residues: AA9 family lytic polysaccharide monooxygenase A (353 aa).

A signal peptide spans 1 to 19 (MKSTFGLLALAAAAKMAHA). 2 residues coordinate Cu(2+): His-20 and His-102. A disulfide bridge connects residues Cys-62 and Cys-183. His-169 is a binding site for O2. Tyr-180 contacts Cu(2+). The span at 266-276 (KPTTTTAAAPA) shows a compositional bias: low complexity. A disordered region spans residues 266–316 (KPTTTTAAAPAETDSCDGDDDDYETETPAPQASATQAPAPQRPAPQTPSGS). Residues 279 to 290 (DSCDGDDDDYET) are compositionally biased toward acidic residues. Over residues 291–304 (ETPAPQASATQAPA) the composition is skewed to low complexity. One can recognise a CBM1 domain in the interval 315–351 (GSVKEWYQCGGINYTGAKNCESGLVCKEWNPYYHQCI). The N-linked (GlcNAc...) asparagine glycan is linked to Asn-327.

Belongs to the polysaccharide monooxygenase AA9 family. Cu(2+) is required as a cofactor.

It localises to the secreted. It carries out the reaction [(1-&gt;4)-beta-D-glucosyl]n+m + reduced acceptor + O2 = 4-dehydro-beta-D-glucosyl-[(1-&gt;4)-beta-D-glucosyl]n-1 + [(1-&gt;4)-beta-D-glucosyl]m + acceptor + H2O.. Lytic polysaccharide monooxygenase (LPMO) that depolymerizes crystalline and amorphous polysaccharides via the oxidation of scissile alpha- or beta-(1-4)-glycosidic bonds, yielding C4 oxidation products. Catalysis by LPMOs requires the reduction of the active-site copper from Cu(II) to Cu(I) by a reducing agent and H(2)O(2) or O(2) as a cosubstrate. This is AA9 family lytic polysaccharide monooxygenase A (eglD) from Aspergillus clavatus (strain ATCC 1007 / CBS 513.65 / DSM 816 / NCTC 3887 / NRRL 1 / QM 1276 / 107).